Reading from the N-terminus, the 262-residue chain is Polyamine aminopropyltransferase (262 aa).

Positions 1 to 249 (MWITQEITPY…DIHRAAFALP (249 aa)) constitute a PABS domain. N29 is an S-methyl-5'-thioadenosine binding site. Residue D83 coordinates spermidine. D155 (proton acceptor) is an active-site residue.

It belongs to the spermidine/spermine synthase family. In terms of assembly, homodimer or homotetramer.

It localises to the cytoplasm. The enzyme catalyses S-adenosyl 3-(methylsulfanyl)propylamine + putrescine = S-methyl-5'-thioadenosine + spermidine + H(+). It functions in the pathway amine and polyamine biosynthesis; spermidine biosynthesis; spermidine from putrescine: step 1/1. Functionally, catalyzes the irreversible transfer of a propylamine group from the amino donor S-adenosylmethioninamine (decarboxy-AdoMet) to putrescine (1,4-diaminobutane) to yield spermidine. The sequence is that of Polyamine aminopropyltransferase from Helicobacter pylori (strain HPAG1).